The following is a 484-amino-acid chain: Monocarboxylate transporter 2 (484 aa).

At 1–16 (MPAPTAVPPPHPLPPD) the chain is on the cytoplasmic side. A helical transmembrane segment spans residues 17–37 (GGWGWVVVGASFISIGFSYAF). Over 38–60 (PKSVTVFFKDIQEIFRAGHSKVA) the chain is Extracellular. The chain crosses the membrane as a helical span at residues 61–81 (WISSIMLAVMYAGGPISSVLV). Residues 82–87 (NKYGSR) lie on the Cytoplasmic side of the membrane. Residues 88–108 (PVVVIGGLLCCTGMILASFST) form a helical membrane-spanning segment. Over 109–116 (SMIQLYLT) the chain is Extracellular. Residues 117-137 (IGFISGLGLAFNLQPALTILG) traverse the membrane as a helical segment. The Cytoplasmic portion of the chain corresponds to 138–144 (KYFYRRR). The helical transmembrane segment at 145-165 (PLASGLAMTGSPVFLSSLAPF) threads the bilayer. Over 166 to 174 (NQYLFNSYG) the chain is Extracellular. A helical transmembrane segment spans residues 175-195 (LKGSFLILGGIFLHSCVAGSL). At 196–245 (MRPVGTSQQSPKSKSKVSSRHDSSTKKAPKLTLAQRINMFLDFSLFKHRG) the chain is on the cytoplasmic side. Positions 198 to 223 (PVGTSQQSPKSKSKVSSRHDSSTKKA) are disordered. Residues 246–266 (FLIYLSGNVIMFLGFFAPVIF) traverse the membrane as a helical segment. Residues 267-281 (LSPYAKNRGVDDYKA) are Extracellular-facing. A helical transmembrane segment spans residues 282 to 302 (AYLLSVMAFVDMFSRPCGGLI). At 303–311 (ANTRLVRPR) the chain is on the cytoplasmic side. Residues 312 to 332 (IQYFFSLAIVFTGVCHLLCPL) traverse the membrane as a helical segment. Residues 333 to 337 (AESYT) are Extracellular-facing. A helical transmembrane segment spans residues 338-358 (ALVVYAIFFGYGFGSVSSILF). Residues 359–372 (ETLMDLVGPARFSS) lie on the Cytoplasmic side of the membrane. A helical transmembrane segment spans residues 373–393 (AVGLVTIVECCPVLLGPPLAG). The Extracellular segment spans residues 394-405 (KLVDETGEHKYL). Residues 406 to 426 (FVASGAIVVLAGIWLFIGNAI) form a helical membrane-spanning segment. Over 427–484 (NYRLLAKERKREKARKKKSPNRHSKELESLSKSNQDDVAVRVPQAHRSPSDKERESNI) the chain is Cytoplasmic. The tract at residues 437–484 (REKARKKKSPNRHSKELESLSKSNQDDVAVRVPQAHRSPSDKERESNI) is disordered. Over residues 438 to 448 (EKARKKKSPNR) the composition is skewed to basic residues. Composition is skewed to basic and acidic residues over residues 449 to 465 (HSKE…DDVA) and 474 to 484 (SPSDKERESNI).

Belongs to the major facilitator superfamily. Monocarboxylate porter (TC 2.A.1.13) family. In terms of assembly, homodimer. Interacts with GRID2IP. Interacts with EMB; interaction mediates SLC16A7 targeting to the plasma membrane. Interacts with isoform 2 of BSG.

The protein resides in the cell membrane. It is found in the basolateral cell membrane. The protein localises to the cytoplasm. The enzyme catalyses 3-methyl-2-oxobutanoate(out) + H(+)(out) = 3-methyl-2-oxobutanoate(in) + H(+)(in). The catalysed reaction is (S)-lactate(in) + H(+)(in) = (S)-lactate(out) + H(+)(out). It catalyses the reaction acetoacetate(out) + H(+)(out) = acetoacetate(in) + H(+)(in). It carries out the reaction (R)-3-hydroxybutanoate(out) + H(+)(out) = (R)-3-hydroxybutanoate(in) + H(+)(in). The enzyme catalyses 4-methyl-2-oxopentanoate(out) + H(+)(out) = 4-methyl-2-oxopentanoate(in) + H(+)(in). The catalysed reaction is pyruvate(out) + H(+)(out) = pyruvate(in) + H(+)(in). It catalyses the reaction (S)-3-hydroxybutanoate(out) + H(+)(out) = (S)-3-hydroxybutanoate(in) + H(+)(in). Transport activity exhibits steep dependence on substrate concentration. Substrate concentration sensitivity of SLC16A7 arises from the strong inter-subunit cooperativity of the SLC16A7 dimer during transport. Inhibited by AR-C155858. Functionally, proton-coupled monocarboxylate symporter. Catalyzes the rapid transport across the plasma membrane of monocarboxylates such as L-lactate, pyruvate and ketone bodies, acetoacetate, beta-hydroxybutyrate and acetate. Dimerization is functionally required and both subunits work cooperatively in transporting substrate. The protein is Monocarboxylate transporter 2 (SLC16A7) of Meriones unguiculatus (Mongolian jird).